A 195-amino-acid polypeptide reads, in one-letter code: MSNPITITESAQSHFAKLLAQQPEGTNIRVFVVNPGTQNAECGVSYCPPEAVEATDTEYPFSGFSAYVDGLSLPFLEEAVIDFVTDKMGSQLTLKAPNAKMRKVSDDASLMERVEYALQTQVNPQLAGHGGHVRLISISDDGVALVQFGGGCNGCSMVDVTLKEGIEKELLAQFAGELTAVRDSTEHDRGEHSYY.

The [4Fe-4S] cluster site is built by Cys-152 and Cys-155.

The protein belongs to the NfuA family. As to quaternary structure, homodimer. [4Fe-4S] cluster serves as cofactor.

Its function is as follows. Involved in iron-sulfur cluster biogenesis. Binds a 4Fe-4S cluster, can transfer this cluster to apoproteins, and thereby intervenes in the maturation of Fe/S proteins. Could also act as a scaffold/chaperone for damaged Fe/S proteins. This Vibrio cholerae serotype O1 (strain ATCC 39541 / Classical Ogawa 395 / O395) protein is Fe/S biogenesis protein NfuA.